The chain runs to 94 residues: Co-chaperonin GroES (94 aa).

The protein belongs to the GroES chaperonin family. In terms of assembly, heptamer of 7 subunits arranged in a ring. Interacts with the chaperonin GroEL.

It localises to the cytoplasm. Functionally, together with the chaperonin GroEL, plays an essential role in assisting protein folding. The GroEL-GroES system forms a nano-cage that allows encapsulation of the non-native substrate proteins and provides a physical environment optimized to promote and accelerate protein folding. GroES binds to the apical surface of the GroEL ring, thereby capping the opening of the GroEL channel. The sequence is that of Co-chaperonin GroES from Geobacillus sp. (strain WCH70).